The primary structure comprises 433 residues: Mannan endo-1,4-beta-mannosidase 2 (433 aa).

The first 28 residues, 1 to 28, serve as a signal peptide directing secretion; it reads MAAPTGNGPVIPILGFLTCVAFIYLSFG. Asn-46 is a glycosylation site (N-linked (GlcNAc...) asparagine). Trp-98 is a binding site for substrate. Residue Asn-169 is glycosylated (N-linked (GlcNAc...) asparagine). Asn-214 is a substrate binding site. Glu-215 serves as the catalytic Proton donor. Tyr-295 provides a ligand contact to substrate. The active-site Nucleophile is the Glu-335. Trp-377 lines the substrate pocket.

The protein belongs to the glycosyl hydrolase 5 (cellulase A) family. As to expression, expressed in roots, stems, leaves and seeds.

The protein localises to the secreted. The catalysed reaction is Random hydrolysis of (1-&gt;4)-beta-D-mannosidic linkages in mannans, galactomannans and glucomannans.. The sequence is that of Mannan endo-1,4-beta-mannosidase 2 (MAN2) from Arabidopsis thaliana (Mouse-ear cress).